The sequence spans 98 residues: NADH-ubiquinone oxidoreductase chain 4L (98 aa).

3 helical membrane passes run 1 to 21 (MSMV…GMLV), 29 to 49 (SLLC…VTIL), and 61 to 81 (IVLL…LVMV).

Belongs to the complex I subunit 4L family. As to quaternary structure, core subunit of respiratory chain NADH dehydrogenase (Complex I) which is composed of 45 different subunits.

The protein localises to the mitochondrion inner membrane. The enzyme catalyses a ubiquinone + NADH + 5 H(+)(in) = a ubiquinol + NAD(+) + 4 H(+)(out). In terms of biological role, core subunit of the mitochondrial membrane respiratory chain NADH dehydrogenase (Complex I) which catalyzes electron transfer from NADH through the respiratory chain, using ubiquinone as an electron acceptor. Part of the enzyme membrane arm which is embedded in the lipid bilayer and involved in proton translocation. This chain is NADH-ubiquinone oxidoreductase chain 4L (MT-ND4L), found in Canis latrans (Coyote).